The chain runs to 560 residues: Membrane protein insertase YidC (560 aa).

A helical membrane pass occupies residues 1-21 (MDIKRTILIAALAVVSYVMVL). Positions 42–66 (VAPGLPDGVPAGNNGASADVPSANA) are disordered. A run of 5 helical transmembrane segments spans residues 341–361 (LELTVDYGFLWFIAQPIFWLL), 367–387 (LLGNWGWSIIVLTMLIKGLFF), 437–457 (LGGCLPILVQMPVFLALYWVL), 468–488 (WILWITDLSIKDPFFILPIIM), and 515–535 (PIIFTFFFLWFPAGLVLYWVV).

This sequence belongs to the OXA1/ALB3/YidC family. Type 1 subfamily. As to quaternary structure, interacts with the Sec translocase complex via SecD. Specifically interacts with transmembrane segments of nascent integral membrane proteins during membrane integration.

It is found in the cell inner membrane. Functionally, required for the insertion and/or proper folding and/or complex formation of integral membrane proteins into the membrane. Involved in integration of membrane proteins that insert both dependently and independently of the Sec translocase complex, as well as at least some lipoproteins. Aids folding of multispanning membrane proteins. In Pseudomonas putida (strain ATCC 47054 / DSM 6125 / CFBP 8728 / NCIMB 11950 / KT2440), this protein is Membrane protein insertase YidC.